A 542-amino-acid chain; its full sequence is Sensor protein CitS (542 aa).

Topologically, residues 1–13 are cytoplasmic; sequence MVKKRFHFSLQTK. The chain crosses the membrane as a helical span at residues 14 to 34; sequence IMGLIAALLVFVIGVLTITLA. At 35 to 175 the chain is on the extracellular side; the sequence is VQHTQGERRQ…TEQSIKKHLR (141 aa). Residues 176 to 196 traverse the membrane as a helical segment; that stretch reads NLSVIAVLVLLLGFIGAAVLA. Residues 197–542 lie on the Cytoplasmic side of the membrane; that stretch reads KSIRKDTLGL…PFDSHRDCGG (346 aa). Residues 216–279 enclose the PAS domain; the sequence is RERNAMLFAI…MSVLEKGEML (64 aa). Residues 336–528 enclose the Histidine kinase domain; the sequence is AQTHEFSNKL…VFTVFIPKEK (193 aa). A Phosphohistidine; by autocatalysis modification is found at histidine 339.

It is found in the cell membrane. It catalyses the reaction ATP + protein L-histidine = ADP + protein N-phospho-L-histidine.. In terms of biological role, member of the two-component regulatory system CitT/CitS. Regulates the expression of the citM-yflN operon. Functions probably as a membrane-associated protein kinase that phosphorylates CitT in response to environmental citrate or Mg(2+)-citrate complex. The protein is Sensor protein CitS (citS) of Bacillus subtilis (strain 168).